An 88-amino-acid polypeptide reads, in one-letter code: Small ribosomal subunit protein uS15 (88 aa).

It belongs to the universal ribosomal protein uS15 family. Part of the 30S ribosomal subunit. Forms a bridge to the 50S subunit in the 70S ribosome, contacting the 23S rRNA.

In terms of biological role, one of the primary rRNA binding proteins, it binds directly to 16S rRNA where it helps nucleate assembly of the platform of the 30S subunit by binding and bridging several RNA helices of the 16S rRNA. Its function is as follows. Forms an intersubunit bridge (bridge B4) with the 23S rRNA of the 50S subunit in the ribosome. This is Small ribosomal subunit protein uS15 from Caldicellulosiruptor saccharolyticus (strain ATCC 43494 / DSM 8903 / Tp8T 6331).